A 534-amino-acid polypeptide reads, in one-letter code: Prolyl 4-hydroxylase subunit alpha-1 (534 aa).

A signal peptide spans 1 to 17 (MIWVVLMMAILLPQSLA). The N-linked (GlcNAc...) asparagine glycan is linked to Asn113. The TPR repeat unit spans residues 205-238 (VSVLDYLSYAVYQQGDLDKALLLTKKLLELDPEH). Residue Asn259 is glycosylated (N-linked (GlcNAc...) asparagine). The Fe2OG dioxygenase domain maps to 411–519 (TAEELQVANY…KWVSNKWLHE (109 aa)). Fe cation contacts are provided by His429, Asp431, and His500. Lys510 contributes to the 2-oxoglutarate binding site.

It belongs to the P4HA family. As to quaternary structure, heterotetramer of two alpha-1 chains and two beta chains (P4HB)(the beta chain is the multi-functional PDI), where P4HB plays the role of a structural subunit; this tetramer catalyzes the formation of 4-hydroxyproline in collagen. It depends on Fe(2+) as a cofactor. Requires L-ascorbate as cofactor. In terms of tissue distribution, expressed at least in brain, heart and lung.

It is found in the endoplasmic reticulum lumen. It carries out the reaction L-prolyl-[collagen] + 2-oxoglutarate + O2 = trans-4-hydroxy-L-prolyl-[collagen] + succinate + CO2. Its activity is regulated as follows. Inhibited by poly(L-proline). Catalyzes the post-translational formation of 4-hydroxyproline in -Xaa-Pro-Gly- sequences in collagens and other proteins. The protein is Prolyl 4-hydroxylase subunit alpha-1 (P4ha1) of Mus musculus (Mouse).